The chain runs to 81 residues: Small ribosomal subunit protein uS17 (81 aa).

This sequence belongs to the universal ribosomal protein uS17 family. In terms of assembly, part of the 30S ribosomal subunit.

One of the primary rRNA binding proteins, it binds specifically to the 5'-end of 16S ribosomal RNA. In Protochlamydia amoebophila (strain UWE25), this protein is Small ribosomal subunit protein uS17.